Consider the following 140-residue polypeptide: uncharacterized protein (140 aa).

Residues 34 to 88 (PLRWRNRARNREKPHSPRAVSSPATHSLPPSNPCRLTPTLSSARPREGSCPSKCS) are disordered.

In terms of tissue distribution, expressed in a range of cell lines, including B-cell lymphoma and prostate.

This is an uncharacterized protein from Homo sapiens (Human).